The sequence spans 511 residues: UDP-N-acetylhexosamine pyrophosphorylase-like protein 1 (511 aa).

Residues 1–19 (MDRSESAESAESRRRRAEE) are compositionally biased toward basic and acidic residues. The segment at 1-22 (MDRSESAESAESRRRRAEESGQ) is disordered. The Substrate binding motif lies at 117-120 (LAGG). UTP is bound by residues 117–120 (LAGG), K131, Q205, and G231. Substrate is bound at residue N232. Position 262 (D262) interacts with UTP. Positions 312-313 (EY) match the Substrate binding motif. Position 386 (K386) interacts with UTP. K416 serves as a coordination point for substrate.

This sequence belongs to the UDPGP type 1 family.

This Xenopus tropicalis (Western clawed frog) protein is UDP-N-acetylhexosamine pyrophosphorylase-like protein 1 (uap1l1).